Consider the following 355-residue polypeptide: Nuclear speckle splicing regulatory protein 1 homolog (355 aa).

The segment at 1–57 (MSGTGFRYGLNVMKKKKPNESSNRITFTEDDSSSSEQEHAPIPNSFSSQITAASDAS) is disordered. A compositionally biased stretch (polar residues) spans 44-54 (NSFSSQITAAS). Residues 99–162 (MENLIESAKK…EDRKEEDEKS (64 aa)) are a coiled coil. Disordered stretches follow at residues 253 to 292 (SANN…HGTY) and 325 to 355 (KIHA…ATNP). Basic and acidic residues predominate over residues 280–289 (YHQDRPDKRH). Residues 293–326 (SLEEIDKQRKEFENRQRLQKEKEFQKSREAALKI) adopt a coiled-coil conformation. The span at 329–339 (SRNTTETQVQS) shows a compositional bias: polar residues. A compositionally biased stretch (basic residues) spans 346–355 (QRKKKAATNP).

Belongs to the NSRP1 family.

This is Nuclear speckle splicing regulatory protein 1 homolog from Schizosaccharomyces pombe (strain 972 / ATCC 24843) (Fission yeast).